Here is a 317-residue protein sequence, read N- to C-terminus: Transaldolase (317 aa).

Lys131 (schiff-base intermediate with substrate) is an active-site residue.

It belongs to the transaldolase family. Type 1 subfamily. Homodimer.

It localises to the cytoplasm. The enzyme catalyses D-sedoheptulose 7-phosphate + D-glyceraldehyde 3-phosphate = D-erythrose 4-phosphate + beta-D-fructose 6-phosphate. The protein operates within carbohydrate degradation; pentose phosphate pathway; D-glyceraldehyde 3-phosphate and beta-D-fructose 6-phosphate from D-ribose 5-phosphate and D-xylulose 5-phosphate (non-oxidative stage): step 2/3. In terms of biological role, transaldolase is important for the balance of metabolites in the pentose-phosphate pathway. The polypeptide is Transaldolase (Baumannia cicadellinicola subsp. Homalodisca coagulata).